We begin with the raw amino-acid sequence, 160 residues long: Cytochrome b6-f complex subunit 4 (160 aa).

3 helical membrane passes run 36–56 (LLYM…GLSV), 95–115 (LLGV…PFIE), and 131–151 (ILFL…TFPI).

It belongs to the cytochrome b family. PetD subfamily. The 4 large subunits of the cytochrome b6-f complex are cytochrome b6, subunit IV (17 kDa polypeptide, petD), cytochrome f and the Rieske protein, while the 4 small subunits are petG, petL, petM and petN. The complex functions as a dimer. Post-translationally, the N-terminus is blocked.

The protein resides in the plastid. The protein localises to the chloroplast thylakoid membrane. Functionally, component of the cytochrome b6-f complex, which mediates electron transfer between photosystem II (PSII) and photosystem I (PSI), cyclic electron flow around PSI, and state transitions. The polypeptide is Cytochrome b6-f complex subunit 4 (Chlamydomonas reinhardtii (Chlamydomonas smithii)).